Reading from the N-terminus, the 684-residue chain is DNA-directed RNA polymerase subunit beta' (684 aa).

Zn(2+) contacts are provided by cysteine 69, cysteine 71, cysteine 87, and cysteine 90. Positions 489, 491, and 493 each coordinate Mg(2+).

The protein belongs to the RNA polymerase beta' chain family. RpoC1 subfamily. In plastids the minimal PEP RNA polymerase catalytic core is composed of four subunits: alpha, beta, beta', and beta''. When a (nuclear-encoded) sigma factor is associated with the core the holoenzyme is formed, which can initiate transcription. It depends on Mg(2+) as a cofactor. The cofactor is Zn(2+).

The protein localises to the plastid. Its subcellular location is the chloroplast. It carries out the reaction RNA(n) + a ribonucleoside 5'-triphosphate = RNA(n+1) + diphosphate. Functionally, DNA-dependent RNA polymerase catalyzes the transcription of DNA into RNA using the four ribonucleoside triphosphates as substrates. This is DNA-directed RNA polymerase subunit beta' from Marchantia polymorpha (Common liverwort).